The following is a 315-amino-acid chain: Transcription antitermination protein NusB (315 aa).

A disordered region spans residues 296–315; that stretch reads SANFDTKSAELNDADEKSQD. Residues 302–315 are compositionally biased toward basic and acidic residues; that stretch reads KSAELNDADEKSQD.

This sequence belongs to the NusB family.

In terms of biological role, involved in transcription antitermination. Required for transcription of ribosomal RNA (rRNA) genes. Binds specifically to the boxA antiterminator sequence of the ribosomal RNA (rrn) operons. The protein is Transcription antitermination protein NusB of Psychrobacter cryohalolentis (strain ATCC BAA-1226 / DSM 17306 / VKM B-2378 / K5).